The sequence spans 186 residues: dCTP deaminase (186 aa).

107–112 (KSTYAR) is a dCTP binding site. Residue glutamate 133 is the Proton donor/acceptor of the active site. 4 residues coordinate dCTP: glutamine 152, tyrosine 166, lysine 175, and glutamine 176.

It belongs to the dCTP deaminase family. As to quaternary structure, homotrimer.

The enzyme catalyses dCTP + H2O + H(+) = dUTP + NH4(+). It participates in pyrimidine metabolism; dUMP biosynthesis; dUMP from dCTP (dUTP route): step 1/2. Its function is as follows. Catalyzes the deamination of dCTP to dUTP. The protein is dCTP deaminase of Wolinella succinogenes (strain ATCC 29543 / DSM 1740 / CCUG 13145 / JCM 31913 / LMG 7466 / NCTC 11488 / FDC 602W) (Vibrio succinogenes).